We begin with the raw amino-acid sequence, 310 residues long: Probable deoxyhypusine synthase (310 aa).

Lys280 serves as the catalytic Nucleophile.

It belongs to the deoxyhypusine synthase family. Requires NAD(+) as cofactor.

The enzyme catalyses [eIF5A protein]-L-lysine + spermidine = [eIF5A protein]-deoxyhypusine + propane-1,3-diamine. Its pathway is protein modification; eIF5A hypusination. Its function is as follows. Catalyzes the NAD-dependent oxidative cleavage of spermidine and the subsequent transfer of the butylamine moiety of spermidine to the epsilon-amino group of a specific lysine residue of the eIF-5A precursor protein to form the intermediate deoxyhypusine residue. The polypeptide is Probable deoxyhypusine synthase (dys) (Aeropyrum pernix (strain ATCC 700893 / DSM 11879 / JCM 9820 / NBRC 100138 / K1)).